The chain runs to 192 residues: Probable apo-citrate lyase phosphoribosyl-dephospho-CoA transferase (192 aa).

This sequence belongs to the CitX family.

It catalyses the reaction apo-[citrate lyase ACP] + 2'-(5''-triphospho-alpha-D-ribosyl)-3'-dephospho-CoA = holo-[citrate lyase ACP] + diphosphate. Functionally, transfers 2-(5''-triphosphoribosyl)-3'-dephosphocoenzyme-A on a serine residue to the apo-acyl carrier protein (gamma chain) of the citrate lyase to yield holo-acyl carrier protein. The polypeptide is Probable apo-citrate lyase phosphoribosyl-dephospho-CoA transferase (Streptococcus pyogenes serotype M18 (strain MGAS8232)).